The primary structure comprises 399 residues: Transmembrane protein 237 homolog (399 aa).

The segment covering 1–11 (MPPTSRPVPPP) has biased composition (pro residues). The tract at residues 1–158 (MPPTSRPVPP…PHDKRNMPAK (158 aa)) is disordered. Basic and acidic residues-rich tracts occupy residues 36–45 (NQQRRFRENN), 111–135 (EAAKHSREDPSGETVEVRRPNDPRR), and 144–158 (KSFRDPHDKRNMPAK). 4 helical membrane-spanning segments follow: residues 222-242 (IANIIQGFLAGISVMLAIFSF), 256-276 (MSLPIHAGFMVAFTVGLVSAI), 301-321 (GLITFIVWFVGLVSTLLCIQL), and 343-363 (VFNVLRALTSGLGFLLLAFKP).

Belongs to the TMEM237 family.

It is found in the membrane. The protein resides in the cell projection. The protein localises to the cilium. Functionally, component of the transition zone in primary cilia. Required for ciliogenesis. The sequence is that of Transmembrane protein 237 homolog from Caenorhabditis elegans.